Here is a 64-residue protein sequence, read N- to C-terminus: Large ribosomal subunit protein eL37 (64 aa).

Zn(2+) contacts are provided by Cys-20, Cys-23, Cys-35, and Cys-38. The C4-type zinc-finger motif lies at 20-38 (CRRCGRRAYHVRKKACAAC).

Belongs to the eukaryotic ribosomal protein eL37 family. It depends on Zn(2+) as a cofactor.

Functionally, binds to the 23S rRNA. This is Large ribosomal subunit protein eL37 from Methanococcus vannielii (strain ATCC 35089 / DSM 1224 / JCM 13029 / OCM 148 / SB).